A 490-amino-acid chain; its full sequence is Betaine aldehyde dehydrogenase (490 aa).

Positions 26, 27, and 93 each coordinate K(+). An NAD(+)-binding site is contributed by 150–152; sequence GAW. Lysine 162 serves as the catalytic Charge relay system. 176–179 contacts NAD(+); that stretch reads KPSE. Valine 180 contributes to the K(+) binding site. An NAD(+)-binding site is contributed by 230 to 233; sequence GTST. Leucine 246 is a K(+) binding site. The Proton acceptor role is filled by glutamate 252. 3 residues coordinate NAD(+): glycine 254, cysteine 286, and glutamate 387. Cysteine 286 acts as the Nucleophile in catalysis. Cysteine 286 carries the cysteine sulfenic acid (-SOH) modification. Lysine 457 and glycine 460 together coordinate K(+). Glutamate 464 functions as the Charge relay system in the catalytic mechanism.

It belongs to the aldehyde dehydrogenase family. In terms of assembly, dimer of dimers. Requires K(+) as cofactor.

It carries out the reaction betaine aldehyde + NAD(+) + H2O = glycine betaine + NADH + 2 H(+). The protein operates within amine and polyamine biosynthesis; betaine biosynthesis via choline pathway; betaine from betaine aldehyde: step 1/1. Its function is as follows. Involved in the biosynthesis of the osmoprotectant glycine betaine. Catalyzes the irreversible oxidation of betaine aldehyde to the corresponding acid. The chain is Betaine aldehyde dehydrogenase from Pseudomonas aeruginosa (strain UCBPP-PA14).